A 198-amino-acid polypeptide reads, in one-letter code: UPF0314 protein Saro_1818 (198 aa).

5 helical membrane passes run 13-33, 62-82, 96-116, 153-173, and 177-197; these read GGSL…LGMG, WYSF…HIVW, LALA…PIII, APVL…LWAI, and LALN…WQGG.

The protein belongs to the UPF0314 family.

The protein localises to the cell membrane. The protein is UPF0314 protein Saro_1818 of Novosphingobium aromaticivorans (strain ATCC 700278 / DSM 12444 / CCUG 56034 / CIP 105152 / NBRC 16084 / F199).